A 117-amino-acid chain; its full sequence is MRHKHGYRKLGRTSSHRAALLKNLTIALVNSGKIETTLPKAKELRGYVERLITRARLGDFNAHRAVFASLQDKNATNKLVTEIAPKFKDRNGGYTRIIKTRIRRGDAAEMAFIEFVA.

It belongs to the bacterial ribosomal protein bL17 family. As to quaternary structure, part of the 50S ribosomal subunit. Contacts protein L32.

The sequence is that of Large ribosomal subunit protein bL17 from Campylobacter jejuni subsp. jejuni serotype O:6 (strain 81116 / NCTC 11828).